Consider the following 407-residue polypeptide: Argininosuccinate synthase (407 aa).

Residues 12–20 and A39 each bind ATP; that span reads AYSGGLDTS. L-citrulline contacts are provided by Y92 and S97. G122 is a binding site for ATP. 3 residues coordinate L-aspartate: T124, N128, and D129. N128 contacts L-citrulline. L-citrulline-binding residues include R132, S183, S192, E268, and Y280.

It belongs to the argininosuccinate synthase family. Type 1 subfamily. In terms of assembly, homotetramer.

Its subcellular location is the cytoplasm. The catalysed reaction is L-citrulline + L-aspartate + ATP = 2-(N(omega)-L-arginino)succinate + AMP + diphosphate + H(+). Its pathway is amino-acid biosynthesis; L-arginine biosynthesis; L-arginine from L-ornithine and carbamoyl phosphate: step 2/3. This Caulobacter sp. (strain K31) protein is Argininosuccinate synthase.